A 1463-amino-acid chain; its full sequence is Kinesin-like protein KIF15 (1463 aa).

The Kinesin motor domain maps to 18–354 (AIKVFVRVRP…LKFARRAKMI (337 aa)). 99–106 (GQTGSGKT) lines the ATP pocket. The interval 387-424 (AEGSIPRGPSESGDSQMSNSSTESNGPVSGQQSGSSSS) is disordered. A compositionally biased stretch (polar residues) spans 398–414 (SGDSQMSNSSTESNGPV). Over residues 415 to 424 (SGQQSGSSSS) the composition is skewed to low complexity. Coiled coils occupy residues 436-517 (SLRD…LEHN) and 586-646 (TSTL…QGMK). Disordered regions lie at residues 686-720 (AGEE…SGDI), 1335-1356 (FKEK…SKLT), and 1409-1444 (QLGK…EAGA). Residues 701–715 (DNGSPLRSHSTNSLP) show a composition bias toward polar residues. Over residues 1418–1428 (EQMKRDYEALQ) the composition is skewed to basic and acidic residues.

The protein belongs to the TRAFAC class myosin-kinesin ATPase superfamily. Kinesin family. KLP2 subfamily. As to quaternary structure, homodimer.

It is found in the cytoplasm. The protein resides in the cytoskeleton. It localises to the spindle. Its function is as follows. Plus-end directed kinesin-like motor enzyme involved in mitotic spindle assembly. Plays a role in positioning spindle poles during mitosis, specifically at prometaphase. The chain is Kinesin-like protein KIF15 (KIF15) from Strongylocentrotus purpuratus (Purple sea urchin).